We begin with the raw amino-acid sequence, 366 residues long: NADH-quinone oxidoreductase subunit D (366 aa).

Belongs to the complex I 49 kDa subunit family. NDH-1 is composed of 14 different subunits. Subunits NuoB, C, D, E, F, and G constitute the peripheral sector of the complex.

Its subcellular location is the cell membrane. It carries out the reaction a quinone + NADH + 5 H(+)(in) = a quinol + NAD(+) + 4 H(+)(out). In terms of biological role, NDH-1 shuttles electrons from NADH, via FMN and iron-sulfur (Fe-S) centers, to quinones in the respiratory chain. The immediate electron acceptor for the enzyme in this species is believed to be a menaquinone. Couples the redox reaction to proton translocation (for every two electrons transferred, four hydrogen ions are translocated across the cytoplasmic membrane), and thus conserves the redox energy in a proton gradient. The sequence is that of NADH-quinone oxidoreductase subunit D from Bacillus cereus (strain ATCC 14579 / DSM 31 / CCUG 7414 / JCM 2152 / NBRC 15305 / NCIMB 9373 / NCTC 2599 / NRRL B-3711).